Here is an 876-residue protein sequence, read N- to C-terminus: Alanine--tRNA ligase (876 aa).

Zn(2+)-binding residues include histidine 565, histidine 569, cysteine 667, and histidine 671.

The protein belongs to the class-II aminoacyl-tRNA synthetase family. It depends on Zn(2+) as a cofactor.

Its subcellular location is the cytoplasm. It carries out the reaction tRNA(Ala) + L-alanine + ATP = L-alanyl-tRNA(Ala) + AMP + diphosphate. In terms of biological role, catalyzes the attachment of alanine to tRNA(Ala) in a two-step reaction: alanine is first activated by ATP to form Ala-AMP and then transferred to the acceptor end of tRNA(Ala). Also edits incorrectly charged Ser-tRNA(Ala) and Gly-tRNA(Ala) via its editing domain. This is Alanine--tRNA ligase from Staphylococcus epidermidis (strain ATCC 35984 / DSM 28319 / BCRC 17069 / CCUG 31568 / BM 3577 / RP62A).